The sequence spans 350 residues: Ubiquitin carboxyl-terminal hydrolase 11 (350 aa).

Positions lysine 49–glutamate 344 constitute a USP domain. Cysteine 59 functions as the Nucleophile in the catalytic mechanism. The active-site Proton acceptor is the histidine 302.

Belongs to the peptidase C19 family.

It carries out the reaction Thiol-dependent hydrolysis of ester, thioester, amide, peptide and isopeptide bonds formed by the C-terminal Gly of ubiquitin (a 76-residue protein attached to proteins as an intracellular targeting signal).. The sequence is that of Ubiquitin carboxyl-terminal hydrolase 11 (ubp11) from Schizosaccharomyces pombe (strain 972 / ATCC 24843) (Fission yeast).